Consider the following 485-residue polypeptide: Anthranilate synthase component I-like protein (485 aa).

L-tryptophan is bound by residues Ser69 and 271–273 (PFA). 306–307 (GT) serves as a coordination point for chorismate. A Mg(2+)-binding site is contributed by Glu333. Residues Arg441, 455 to 457 (GAG), and Gly457 each bind chorismate. Residue Glu470 coordinates Mg(2+).

The protein belongs to the anthranilate synthase component I family. Tetramer of two components I and two components II. Requires Mg(2+) as cofactor.

The enzyme catalyses chorismate + L-glutamine = anthranilate + pyruvate + L-glutamate + H(+). The protein operates within amino-acid biosynthesis; L-tryptophan biosynthesis; L-tryptophan from chorismate: step 1/5. The protein is Anthranilate synthase component I-like protein (trpE2) of Synechocystis sp. (strain ATCC 27184 / PCC 6803 / Kazusa).